We begin with the raw amino-acid sequence, 206 residues long: Putative apoptosis inhibitor 021L (206 aa).

Polar residues predominate over residues 95-105; the sequence is TSKSPVSNQPS. The interval 95–114 is disordered; sequence TSKSPVSNQPSPEEDEPIPD. The segment at 157–195 adopts an RING-type zinc-finger fold; it reads CVVCQANVRNVVFVPCNHLATCISCSANPLMPKKCPMCR.

This sequence belongs to the IIV-6 193R family.

Plays a role early in infection by preventing host cell apoptosis. The sequence is that of Putative apoptosis inhibitor 021L from Aedes vexans (Inland floodwater mosquito).